Consider the following 436-residue polypeptide: tRNA(Ile)-lysidine synthase (436 aa).

Residue 27–32 (SGGVDS) coordinates ATP.

The protein belongs to the tRNA(Ile)-lysidine synthase family.

It is found in the cytoplasm. The catalysed reaction is cytidine(34) in tRNA(Ile2) + L-lysine + ATP = lysidine(34) in tRNA(Ile2) + AMP + diphosphate + H(+). In terms of biological role, ligates lysine onto the cytidine present at position 34 of the AUA codon-specific tRNA(Ile) that contains the anticodon CAU, in an ATP-dependent manner. Cytidine is converted to lysidine, thus changing the amino acid specificity of the tRNA from methionine to isoleucine. The protein is tRNA(Ile)-lysidine synthase of Vibrio vulnificus (strain YJ016).